Here is a 340-residue protein sequence, read N- to C-terminus: 4-hydroxythreonine-4-phosphate dehydrogenase (340 aa).

Substrate-binding residues include H141 and T142. 3 residues coordinate a divalent metal cation: H171, H216, and H271. Substrate is bound by residues K279, N288, and R297.

Belongs to the PdxA family. In terms of assembly, homodimer. The cofactor is Zn(2+). Mg(2+) serves as cofactor. Requires Co(2+) as cofactor.

It is found in the cytoplasm. The catalysed reaction is 4-(phosphooxy)-L-threonine + NAD(+) = 3-amino-2-oxopropyl phosphate + CO2 + NADH. It participates in cofactor biosynthesis; pyridoxine 5'-phosphate biosynthesis; pyridoxine 5'-phosphate from D-erythrose 4-phosphate: step 4/5. Catalyzes the NAD(P)-dependent oxidation of 4-(phosphooxy)-L-threonine (HTP) into 2-amino-3-oxo-4-(phosphooxy)butyric acid which spontaneously decarboxylates to form 3-amino-2-oxopropyl phosphate (AHAP). This chain is 4-hydroxythreonine-4-phosphate dehydrogenase, found in Desulforapulum autotrophicum (strain ATCC 43914 / DSM 3382 / VKM B-1955 / HRM2) (Desulfobacterium autotrophicum).